Here is a 341-residue protein sequence, read N- to C-terminus: Anthranilate phosphoribosyltransferase (341 aa).

Residues Gly84, 94–97, 112–120, and Ser124 each bind 5-phospho-alpha-D-ribose 1-diphosphate; these read NVST and KHGGRAASS. Gly84 contributes to the anthranilate binding site. Residue Ser96 participates in Mg(2+) binding. Arg170 provides a ligand contact to anthranilate. The Mg(2+) site is built by Asp229 and Glu230.

The protein belongs to the anthranilate phosphoribosyltransferase family. As to quaternary structure, homodimer. Requires Mg(2+) as cofactor.

It catalyses the reaction N-(5-phospho-beta-D-ribosyl)anthranilate + diphosphate = 5-phospho-alpha-D-ribose 1-diphosphate + anthranilate. It functions in the pathway amino-acid biosynthesis; L-tryptophan biosynthesis; L-tryptophan from chorismate: step 2/5. Catalyzes the transfer of the phosphoribosyl group of 5-phosphorylribose-1-pyrophosphate (PRPP) to anthranilate to yield N-(5'-phosphoribosyl)-anthranilate (PRA). The chain is Anthranilate phosphoribosyltransferase from Methylobacillus flagellatus (strain ATCC 51484 / DSM 6875 / VKM B-1610 / KT).